The sequence spans 2084 residues: MAP kinase-activating death domain protein (2084 aa).

Residues 25-352 form the uDENN domain; it reads TPPMPKGLQG…VPVPGSTRVE (328 aa). Residues 117 to 253 are disordered; it reads PSSAAGSAGA…SPRASRKRTK (137 aa). Residues 118–131 show a composition bias toward low complexity; sequence SSAAGSAGAGNDRP. Gly residues predominate over residues 132–152; the sequence is GNGGPGGHGGGAGGGAGGGGR. The span at 160 to 173 shows a compositional bias: basic and acidic residues; that stretch reads FRRESWRKSMERSS. The segment covering 174 to 183 has biased composition (low complexity); the sequence is DSAFSSDYRS. The segment covering 189–204 has biased composition (basic and acidic residues); sequence DSDRELTSRRDSDQQR. The segment covering 205-215 has biased composition (basic residues); sequence LHSHHSHHQPH. The segment covering 234–245 has biased composition (polar residues); sequence DSESGGSHSPSP. Residues 373–514 enclose the cDENN domain; sequence RFSLVDFPLH…EGTILKNHLK (142 aa). The region spanning 516 to 678 is the dDENN domain; the sequence is ALTSMTATNT…EWSLTPTNVA (163 aa). Disordered regions lie at residues 557–588, 730–749, 811–863, 891–963, 1058–1092, 1115–1188, and 1305–1382; these read TPPH…NSPA, QPTD…SSSY, VASK…TVGS, QESD…SQSS, HSAG…GNNF, FGKK…AENQ, and SSSL…GQST. Residues 558–588 show a composition bias toward polar residues; the sequence is PPHSAQASQRNSMSAQGTISSRQPSPMNSPA. Positions 824 to 839 are enriched in low complexity; sequence SPVSSSSSRSDLSSPS. The span at 913 to 925 shows a compositional bias: basic and acidic residues; that stretch reads HPSDSESRPEKKI. The segment covering 946 to 963 has biased composition (low complexity); that stretch reads GSSGSSSSSPGRQSSQSS. Over residues 1121 to 1131 the composition is skewed to low complexity; the sequence is QKQVPVQQKQP. The span at 1168–1183 shows a compositional bias: basic and acidic residues; it reads TQEELTRQQNQERSHS. Positions 1305–1315 are enriched in low complexity; the sequence is SSSLLSSHAAS. 2 stretches are compositionally biased toward polar residues: residues 1324–1353 and 1370–1382; these read RSPS…STQL and RLSS…GQST. Positions 1490–1565 constitute a Death domain; it reads GMDQGPIEMM…GLVYSQEVHN (76 aa). A compositionally biased stretch (low complexity) spans 1794–1842; sequence DIHAQQKQKHQQQQQHQQPQQQQQPHQTTTQQNQPTAVASAVPTTTAPA. Disordered stretches follow at residues 1794–1865 and 1896–2084; these read DIHA…RHTV and VPVP…HRKH. Polar residues predominate over residues 1845–1858; sequence VNPNRMTAKSQAGS. Residues 1896-1907 show a composition bias toward pro residues; it reads VPVPPTPAPPTS. Positions 1921–1932 are enriched in polar residues; that stretch reads SQPSTESLASIS. Pro residues-rich tracts occupy residues 1933–1953 and 1983–1993; these read SPPP…PAIP and QYTPQPPPPFV. Composition is skewed to low complexity over residues 2001 to 2029 and 2059 to 2077; these read LARA…HSQS and ISGS…ASAS.

It belongs to the MADD family.

Its subcellular location is the cell membrane. The protein localises to the cytoplasm. Functionally, guanyl-nucleotide exchange factor that regulates small GTPases. Converts GDP-bound inactive form of Rab3 to the GTP-bound active forms. The sequence is that of MAP kinase-activating death domain protein from Drosophila melanogaster (Fruit fly).